The chain runs to 129 residues: MYKTGILNSDISKVLSDLGHTDQIVIADCGLPVPKDVKKIDLALTLGQPSFLEVYEVLKQHMEIEHVTIAEEMEVDNAPIFEQVTKDFSEIEQVNHETFKALTKNAKAIIRTGEATPYANIILQSGVIF.

The active-site Proton donor is the H20. Residues D28, H96, and 118–120 contribute to the substrate site; that span reads YAN.

It belongs to the RbsD / FucU family. RbsD subfamily. Homodecamer.

It is found in the cytoplasm. The catalysed reaction is beta-D-ribopyranose = beta-D-ribofuranose. It functions in the pathway carbohydrate metabolism; D-ribose degradation; D-ribose 5-phosphate from beta-D-ribopyranose: step 1/2. Its function is as follows. Catalyzes the interconversion of beta-pyran and beta-furan forms of D-ribose. This is D-ribose pyranase from Staphylococcus haemolyticus (strain JCSC1435).